The following is a 205-amino-acid chain: tRNA (guanine-N(7)-)-methyltransferase (205 aa).

The S-adenosyl-L-methionine site is built by Glu34, Glu59, Asp86, and Asp107. Asp107 is a catalytic residue. Position 111 (Lys111) interacts with substrate. Residues 113–118 (RHEKRR) form an interaction with RNA region. Substrate is bound by residues Asp144 and 182-185 (TGYE).

This sequence belongs to the class I-like SAM-binding methyltransferase superfamily. TrmB family.

The catalysed reaction is guanosine(46) in tRNA + S-adenosyl-L-methionine = N(7)-methylguanosine(46) in tRNA + S-adenosyl-L-homocysteine. It participates in tRNA modification; N(7)-methylguanine-tRNA biosynthesis. Its function is as follows. Catalyzes the formation of N(7)-methylguanine at position 46 (m7G46) in tRNA. This Mycoplasmopsis synoviae (strain 53) (Mycoplasma synoviae) protein is tRNA (guanine-N(7)-)-methyltransferase.